Here is a 295-residue protein sequence, read N- to C-terminus: UDP-3-O-acyl-N-acetylglucosamine deacetylase (295 aa).

Residues histidine 75, histidine 232, and aspartate 236 each coordinate Zn(2+). Histidine 259 acts as the Proton donor in catalysis.

Belongs to the LpxC family. Zn(2+) is required as a cofactor.

The catalysed reaction is a UDP-3-O-[(3R)-3-hydroxyacyl]-N-acetyl-alpha-D-glucosamine + H2O = a UDP-3-O-[(3R)-3-hydroxyacyl]-alpha-D-glucosamine + acetate. It functions in the pathway glycolipid biosynthesis; lipid IV(A) biosynthesis; lipid IV(A) from (3R)-3-hydroxytetradecanoyl-[acyl-carrier-protein] and UDP-N-acetyl-alpha-D-glucosamine: step 2/6. In terms of biological role, catalyzes the hydrolysis of UDP-3-O-myristoyl-N-acetylglucosamine to form UDP-3-O-myristoylglucosamine and acetate, the committed step in lipid A biosynthesis. The protein is UDP-3-O-acyl-N-acetylglucosamine deacetylase of Helicobacter pylori (strain ATCC 700392 / 26695) (Campylobacter pylori).